A 28-amino-acid chain; its full sequence is MPKIIEAVYENGVFKPLQKVDLREGERE.

Belongs to the UPF0165 family.

Possibly the antitoxin component of a type II toxin-antitoxin (TA) system. The polypeptide is Putative antitoxin AF_1079 (Archaeoglobus fulgidus (strain ATCC 49558 / DSM 4304 / JCM 9628 / NBRC 100126 / VC-16)).